A 765-amino-acid polypeptide reads, in one-letter code: Protein transport protein Sec23A (765 aa).

Threonine 2 is subject to N-acetylthreonine. 4 residues coordinate Zn(2+): cysteine 61, cysteine 66, cysteine 85, and cysteine 88. A Phosphothreonine modification is found at threonine 308. The stretch at 632 to 718 is one Gelsolin-like repeat; it reads PEPVLLDSSS…EHGGSQARFL (87 aa).

The protein belongs to the SEC23/SEC24 family. SEC23 subfamily. As to quaternary structure, COPII is composed of at least five proteins: the Sec23/24 complex, the Sec13/31 complex and Sar1. Interacts with SEC23IP. Interacts with HTR4. Interacts with SEC16A. Interacts with SLC6A4. Interacts (as part of the Sec23/24 complex) with SEC22B; recruits SEC22B into COPII-coated vesicles and allows the transport of this cargo from the endoplasmic reticulum to the Golgi. Interacts (via Gelsolin-like repeat) with MIA2 and MIA3; specifically involved in the transport of large cargos like the collagen COL7A1. Interacts with DDHD1. Interacts with TMEM39A. Interacts with SACM1L; this interaction is reduced in the absence of TMEM39A. Interacts with kinase FAM20C; transport of FAM20C from the endoplasmic reticulum to the Golgi is likely to be mediated by COPII vesicles. As to expression, high levels in brain and fibroblasts.

Its subcellular location is the cytoplasmic vesicle. It is found in the COPII-coated vesicle membrane. The protein resides in the endoplasmic reticulum membrane. The protein localises to the cytoplasm. It localises to the cytosol. Component of the coat protein complex II (COPII) which promotes the formation of transport vesicles from the endoplasmic reticulum (ER). The coat has two main functions, the physical deformation of the endoplasmic reticulum membrane into vesicles and the selection of cargo molecules for their transport to the Golgi complex. Required for the translocation of insulin-induced glucose transporter SLC2A4/GLUT4 to the cell membrane. The protein is Protein transport protein Sec23A of Mus musculus (Mouse).